The following is a 480-amino-acid chain: 3-isopropylmalate dehydratase large subunit (480 aa).

The [4Fe-4S] cluster site is built by Cys361, Cys421, and Cys424.

This sequence belongs to the aconitase/IPM isomerase family. LeuC type 1 subfamily. Heterodimer of LeuC and LeuD. It depends on [4Fe-4S] cluster as a cofactor.

It catalyses the reaction (2R,3S)-3-isopropylmalate = (2S)-2-isopropylmalate. It functions in the pathway amino-acid biosynthesis; L-leucine biosynthesis; L-leucine from 3-methyl-2-oxobutanoate: step 2/4. In terms of biological role, catalyzes the isomerization between 2-isopropylmalate and 3-isopropylmalate, via the formation of 2-isopropylmaleate. The protein is 3-isopropylmalate dehydratase large subunit of Corynebacterium diphtheriae (strain ATCC 700971 / NCTC 13129 / Biotype gravis).